The chain runs to 504 residues: 26S proteasome non-ATPase regulatory subunit 5 (504 aa).

The residue at position 2 (alanine 2) is an N-acetylalanine.

Belongs to the proteasome subunit S5B/HSM3 family. As to quaternary structure, interacts with PSMC1, PSMC2, PSMD1 and PSMD6. Part of transient complex containing PSMD5, PSMC2, PSMC1 and PSMD2 formed during the assembly of the 26S proteasome.

Functionally, acts as a chaperone during the assembly of the 26S proteasome, specifically of the base subcomplex of the PA700/19S regulatory complex (RC). In the initial step of the base subcomplex assembly is part of an intermediate PSMD5:PSMC2:PSMC1:PSMD2 module which probably assembles with a PSMD10:PSMC4:PSMC5:PAAF1 module followed by dissociation of PSMD5. The polypeptide is 26S proteasome non-ATPase regulatory subunit 5 (Psmd5) (Mus musculus (Mouse)).